Reading from the N-terminus, the 205-residue chain is Guanylate kinase (205 aa).

The 181-residue stretch at 3–183 folds into the Guanylate kinase-like domain; sequence GFVLLISGPS…SYEALRAILI (181 aa). Residue 10 to 17 participates in ATP binding; that stretch reads GPSGAGKS.

This sequence belongs to the guanylate kinase family.

The protein localises to the cytoplasm. It carries out the reaction GMP + ATP = GDP + ADP. Functionally, essential for recycling GMP and indirectly, cGMP. The sequence is that of Guanylate kinase from Campylobacter jejuni (strain RM1221).